A 278-amino-acid chain; its full sequence is HCLS1-associated protein X-1 (278 aa).

Serine 2 is modified (N-acetylserine). The segment at 2 to 43 is required for localization in mitochondria; the sequence is SVFDLFRGFFGFPGPRSHRDPFFGGMTRDDDDDEDDEEEEDS. Disordered regions lie at residues 15 to 50 and 99 to 262; these read GPRS…GRES and LPSH…ALDD. Positions 30–43 are enriched in acidic residues; sequence DDDDDEDDEEEEDS. The tract at residues 113 to 278 is involved in HCLS1 binding; it reads TPGVRLREGQ…LLLGRWFRSR (166 aa). Basic and acidic residues predominate over residues 132-152; that stretch reads PDSHQPRIFEGVLESHAKPES. Residues 174-205 are involved in CASP9 binding; sequence VSPHSRAREDKDLDSQVSQEGLGPLLQPQPKS. The interval 175-246 is involved in GNA13 binding; that stretch reads SPHSRAREDK…TTVTHQEAHD (72 aa). Positions 182–278 are required for localization in sarcoplasmic reticulum; the sequence is EDKDLDSQVS…LLLGRWFRSR (97 aa). An involved in PKD2 binding region spans residues 183–278; it reads DKDLDSQVSQ…LLLGRWFRSR (96 aa). Serine 188 and serine 191 each carry phosphoserine. Positions 202-224 are involved in PLN binding; the sequence is QPKSYFKSISVTKITKPDGTVEE. Positions 202–244 are involved in ATP2A2 binding; that stretch reads QPKSYFKSISVTKITKPDGTVEEHRTVVDSEGRRETTVTHQEA. Positions 209–278 are mediates interaction with UCP3; that stretch reads SISVTKITKP…LLLGRWFRSR (70 aa). Residues 216–254 show a composition bias toward basic and acidic residues; it reads TKPDGTVEEHRTVVDSEGRRETTVTHQEAHDSSRSDPDP. A required for ITGB6 binding region spans residues 269–278; it reads LLLGRWFRSR.

Belongs to the HAX1 family. In terms of assembly, interacts with ABCB1, ABCB4 and ABCB11. Directly associates with HCLS1/HS1, through binding to its N-terminal region. Interacts with CTTN. Interacts with PKD2. Interacts with GNA13. Interacts with CASP9. Interacts with ITGB6. Interacts with PLN and ATP2A2; these interactions are inhibited by calcium. Interacts with GRB7. Interacts (via C-terminus) with XIAP/BIRC4 (via BIR 2 domain and BIR 3 domain) and this interaction blocks ubiquitination of XIAP/BIRC4. Interacts with TPC2. Interacts with KCNC3. Interacts with XPO1. Interacts with RNF217. Interacts with UCP3; the interaction is direct and calcium-dependent. Interacts with MAPRE2; this interaction regulates cell migration in keratinocytes. In terms of tissue distribution, present in striated muscles (at protein level).

It is found in the mitochondrion matrix. The protein resides in the endoplasmic reticulum. Its subcellular location is the nucleus membrane. It localises to the cytoplasmic vesicle. The protein localises to the cytoplasm. It is found in the cell cortex. The protein resides in the cell membrane. Its subcellular location is the sarcoplasmic reticulum. It localises to the P-body. The protein localises to the nucleus. Its function is as follows. Recruits the Arp2/3 complex to the cell cortex and regulates reorganization of the cortical actin cytoskeleton via its interaction with KCNC3 and the Arp2/3 complex. Slows down the rate of inactivation of KCNC3 channels. Promotes GNA13-mediated cell migration. Involved in the clathrin-mediated endocytosis pathway. May be involved in internalization of ABC transporters such as ABCB11. May inhibit CASP9 and CASP3. Promotes cell survival. May regulate intracellular calcium pools. The chain is HCLS1-associated protein X-1 (Hax1) from Rattus norvegicus (Rat).